An 87-amino-acid polypeptide reads, in one-letter code: uncharacterized protein (87 aa).

The protein to H.pylori HP0495/JHP0447.

This is an uncharacterized protein from Campylobacter jejuni subsp. jejuni serotype O:2 (strain ATCC 700819 / NCTC 11168).